The primary structure comprises 692 residues: Proprotein convertase subtilisin/kexin type 9 (692 aa).

The N-terminal stretch at 1-30 is a signal peptide; that stretch reads MGTVSSRRSWWPLPLPLLLLLLLGPAGARA. The propeptide occupies 31–152; that stretch reads QEDEDGDYEE…IEEDSSVFAQ (122 aa). Sulfotyrosine is present on tyrosine 38. Serine 47 carries the phosphoserine modification. In terms of domain architecture, Inhibitor I9 spans 77-149; the sequence is TYVVVLKEET…VDYIEEDSSV (73 aa). Residues 155–444 form the Peptidase S8 domain; sequence PWNLERITPA…VLTPNLVAAL (290 aa). Residues aspartate 186 and histidine 226 each act as charge relay system in the active site. 2 cysteine pairs are disulfide-bonded: cysteine 223–cysteine 255 and cysteine 323–cysteine 358. Serine 386 functions as the Charge relay system in the catalytic mechanism. Residues 450 to 692 are C-terminal domain; that stretch reads RAGWQLFCRT…HLVQASQELQ (243 aa). Intrachain disulfides connect cysteine 457–cysteine 527, cysteine 477–cysteine 526, and cysteine 486–cysteine 509. Asparagine 533 carries N-linked (GlcNAc...) asparagine glycosylation. Disulfide bonds link cysteine 534/cysteine 601, cysteine 552/cysteine 600, cysteine 562/cysteine 588, cysteine 608/cysteine 679, cysteine 626/cysteine 678, and cysteine 635/cysteine 654. Position 688 is a phosphoserine (serine 688).

Belongs to the peptidase S8 family. As to quaternary structure, monomer. Can self-associate to form dimers and higher multimers which may have increased LDLR degrading activity. The precursor protein but not the mature protein may form multimers. Interacts with APOB, VLDLR, LRP8/APOER2 and BACE1. The full-length immature form (pro-PCSK9) interacts with SCNN1A, SCNN1B and SCNN1G. The pro-PCSK9 form (via C-terminal domain) interacts with LDLR. Interacts (via the C-terminal domain) with ANXA2 (via repeat Annexin 1); the interaction inhibits the degradation of LDLR. Requires Ca(2+) as cofactor. In terms of processing, cleavage by furin and PCSK5 generates a truncated inactive protein that is unable to induce LDLR degradation. Post-translationally, undergoes autocatalytic cleavage in the endoplasmic reticulum to release the propeptide from the N-terminus and the cleavage of the propeptide is strictly required for its maturation and activation. The cleaved propeptide however remains associated with the catalytic domain through non-covalent interactions, preventing potential substrates from accessing its active site. As a result, it is secreted from cells as a propeptide-containing, enzymatically inactive protein. Phosphorylation protects the propeptide against proteolysis.

It localises to the cytoplasm. The protein localises to the secreted. It is found in the endosome. The protein resides in the lysosome. Its subcellular location is the cell surface. It localises to the endoplasmic reticulum. The protein localises to the golgi apparatus. With respect to regulation, its proteolytic activity is autoinhibited by the non-covalent binding of the propeptide to the catalytic domain. Inhibited by EGTA. Crucial player in the regulation of plasma cholesterol homeostasis. Binds to low-density lipid receptor family members: low density lipoprotein receptor (LDLR), very low density lipoprotein receptor (VLDLR), apolipoprotein E receptor (LRP1/APOER) and apolipoprotein receptor 2 (LRP8/APOER2), and promotes their degradation in intracellular acidic compartments. Acts via a non-proteolytic mechanism to enhance the degradation of the hepatic LDLR through a clathrin LDLRAP1/ARH-mediated pathway. May prevent the recycling of LDLR from endosomes to the cell surface or direct it to lysosomes for degradation. Can induce ubiquitination of LDLR leading to its subsequent degradation. Inhibits intracellular degradation of APOB via the autophagosome/lysosome pathway in a LDLR-independent manner. Involved in the disposal of non-acetylated intermediates of BACE1 in the early secretory pathway. Inhibits epithelial Na(+) channel (ENaC)-mediated Na(+) absorption by reducing ENaC surface expression primarily by increasing its proteasomal degradation. Regulates neuronal apoptosis via modulation of LRP8/APOER2 levels and related anti-apoptotic signaling pathways. This is Proprotein convertase subtilisin/kexin type 9 (PCSK9) from Macaca nemestrina (Pig-tailed macaque).